The following is a 387-amino-acid chain: MSDDEREEKELDLTSPEVVTKYKSAAEIVNKALQLVLSECKPKAKIVDLCEKGDAFIKEQTGNMYKNVKKKIERGVAFPTCISVNNTVCHFSPLASDETVVEEGDILKIDMGCHIDGFIAVVGHTHVLHEGPVTGRAADVIAATNTAAEVALRLVRPGKKNSDVTEAIQKVAAAYDCKIVEGVLSHQMKQFVIDGNKVVLSVSNPDTRVDEAEFEENEVYSIDIVTSTGDGKPKLLDEKQTTIYKRAVDKSYNLKMKASRFIFSEISQKFPIMPFTARDLEEKRARLGLVECVNHELLQPYPVLHEKPGDLVAHIKFTVLLMPNGSDRVTSHALQELQPTKTTENEPEIKAWLALPTKTKKKGGGKKKKGKKGDKVEEASQAEPMEG.

Necessary for nucleolar localization regions lie at residues 1-49 (MSDD…IVDL) and 297-387 (LLQP…PMEG). An RNA-binding region spans residues 47–55 (VDLCEKGDA). The disordered stretch occupies residues 337-387 (LQPTKTTENEPEIKAWLALPTKTKKKGGGKKKKGKKGDKVEEASQAEPMEG). An interaction with RNA region spans residues 356–373 (PTKTKKKGGGKKKKGKKG). The segment covering 358–372 (KTKKKGGGKKKKGKK) has biased composition (basic residues). A Nuclear localization signal motif is present at residues 360-369 (KKKGGGKKKK).

The protein belongs to the peptidase M24 family. In terms of assembly, component of a ribonucleoprotein complex. In terms of tissue distribution, expressed during tuberisation and in roots, nodes, internodes, petioles, leaves, stolons, tubers and sprouts.

It is found in the nucleus. In terms of biological role, binds RNA. Associates with 28S, 18S and 5.8S mature rRNAs, several rRNA precursors and probably U3 small nucleolar RNA. May be involved in regulation of intermediate and late steps of rRNA processing. May be involved in ribosome assembly. Required for expression of cell cycle genes such as CYCD3-1, RNR2A and CDKB1-1. Promotes, in a dose- and auxin-dependent manner, organ growth by stimulating both cell proliferation and expansion, via the regulation of RBR1 levels. This is ERBB-3 BINDING PROTEIN 1 from Solanum tuberosum (Potato).